The sequence spans 399 residues: S-adenosylmethionine synthase (399 aa).

H15 contributes to the ATP binding site. D17 contacts Mg(2+). Residue E43 participates in K(+) binding. L-methionine contacts are provided by E56 and Q99. The tract at residues 99-109 is flexible loop; sequence QSPDIADGVDH. ATP is bound by residues 175–177, 242–243, D251, 257–258, A274, and K278; these read DAK, RF, and RK. D251 contributes to the L-methionine binding site. K282 contributes to the L-methionine binding site.

The protein belongs to the AdoMet synthase family. Homotetramer; dimer of dimers. Requires Mg(2+) as cofactor. K(+) is required as a cofactor.

It localises to the cytoplasm. The enzyme catalyses L-methionine + ATP + H2O = S-adenosyl-L-methionine + phosphate + diphosphate. Its pathway is amino-acid biosynthesis; S-adenosyl-L-methionine biosynthesis; S-adenosyl-L-methionine from L-methionine: step 1/1. In terms of biological role, catalyzes the formation of S-adenosylmethionine (AdoMet) from methionine and ATP. The overall synthetic reaction is composed of two sequential steps, AdoMet formation and the subsequent tripolyphosphate hydrolysis which occurs prior to release of AdoMet from the enzyme. The protein is S-adenosylmethionine synthase of Lactobacillus acidophilus (strain ATCC 700396 / NCK56 / N2 / NCFM).